Consider the following 447-residue polypeptide: Na(+)-translocating NADH-quinone reductase subunit A (447 aa).

Belongs to the NqrA family. In terms of assembly, composed of six subunits; NqrA, NqrB, NqrC, NqrD, NqrE and NqrF.

It catalyses the reaction a ubiquinone + n Na(+)(in) + NADH + H(+) = a ubiquinol + n Na(+)(out) + NAD(+). Its function is as follows. NQR complex catalyzes the reduction of ubiquinone-1 to ubiquinol by two successive reactions, coupled with the transport of Na(+) ions from the cytoplasm to the periplasm. NqrA to NqrE are probably involved in the second step, the conversion of ubisemiquinone to ubiquinol. The polypeptide is Na(+)-translocating NADH-quinone reductase subunit A (Haemophilus influenzae (strain ATCC 51907 / DSM 11121 / KW20 / Rd)).